A 308-amino-acid polypeptide reads, in one-letter code: Limonin dehydrogenase (308 aa).

Belongs to the aldehyde dehydrogenase family.

The protein resides in the periplasm. Its activity is regulated as follows. Completely inhibited by HgCl(2), CoCl(2) and CaCl(2). Functionally, catalyzes the NAD(+)-dependent conversion of limonin. This is Limonin dehydrogenase from Pseudomonas putida (Arthrobacter siderocapsulatus).